A 270-amino-acid polypeptide reads, in one-letter code: Acyl-[acyl-carrier-protein]--UDP-N-acetylglucosamine O-acyltransferase (270 aa).

It belongs to the transferase hexapeptide repeat family. LpxA subfamily. Homotrimer.

It localises to the cytoplasm. It catalyses the reaction a (3R)-hydroxyacyl-[ACP] + UDP-N-acetyl-alpha-D-glucosamine = a UDP-3-O-[(3R)-3-hydroxyacyl]-N-acetyl-alpha-D-glucosamine + holo-[ACP]. Its pathway is glycolipid biosynthesis; lipid IV(A) biosynthesis; lipid IV(A) from (3R)-3-hydroxytetradecanoyl-[acyl-carrier-protein] and UDP-N-acetyl-alpha-D-glucosamine: step 1/6. Its function is as follows. Involved in the biosynthesis of lipid A, a phosphorylated glycolipid that anchors the lipopolysaccharide to the outer membrane of the cell. The polypeptide is Acyl-[acyl-carrier-protein]--UDP-N-acetylglucosamine O-acyltransferase (Sinorhizobium medicae (strain WSM419) (Ensifer medicae)).